The primary structure comprises 608 residues: MPRIHVLPPGLVNQIAAGEVVERPASIVKELVENALDAGATAIGVDVEEGGLALVRVADDGSGMDRDDALLALERHATSKLRDAEGLAAIGTMGFRGEAVPAIASVSRFRLDTSPGEDGAGTRVEIEGGVLGEVAPVARPRGTTVEVRDLFFNTPARRKFMRAASTEAGHVSEAVIRLALARPDVGFTLRSGGRLVLGARAGGGLADRAGQALGREAHRHLLPVDARRGEVRVHGLICSPDHSEATGRALYLFVNGRYVRDRAAAHAVLRAFAGTLPPGRHPAGVLFVELPLDRVDVNVHPQKLEVRFAEGREVFDALFHTVAGALRTAPWLRARPQAAPAGEGPPAGGEAVAVPLAGEDAAAVLAWARAARPPEGSGATLVQPAPGAWATGRLAFPIAPAPDAGPEAAPRPEGYFAGLRYVGQHARTYLLCEAPGGTLVVIDQHASHERMLFHRLKEAFRARRIPVQPYLLPQVVTLPPAAARALEAGLAELGRLGFDAEPFGGDAFAVKGAPAALAGVDLTALLTDLGSQLADVERGSAVDDAFHDLLATMACHAAVRANQDVSPEEARALLDGLDAIDFKARCPHGRPVVFELSLADLERRVGRR.

It belongs to the DNA mismatch repair MutL/HexB family.

In terms of biological role, this protein is involved in the repair of mismatches in DNA. It is required for dam-dependent methyl-directed DNA mismatch repair. May act as a 'molecular matchmaker', a protein that promotes the formation of a stable complex between two or more DNA-binding proteins in an ATP-dependent manner without itself being part of a final effector complex. The polypeptide is DNA mismatch repair protein MutL (Anaeromyxobacter dehalogenans (strain 2CP-C)).